The sequence spans 79 residues: Acyl carrier protein (79 aa).

The Carrier domain occupies 2–77; sequence SNIEERVKKI…QAIDYINAHA (76 aa). Ser37 is modified (O-(pantetheine 4'-phosphoryl)serine).

The protein belongs to the acyl carrier protein (ACP) family. In terms of processing, 4'-phosphopantetheine is transferred from CoA to a specific serine of apo-ACP by AcpS. This modification is essential for activity because fatty acids are bound in thioester linkage to the sulfhydryl of the prosthetic group.

Its subcellular location is the cytoplasm. It functions in the pathway lipid metabolism; fatty acid biosynthesis. Functionally, carrier of the growing fatty acid chain in fatty acid biosynthesis. This is Acyl carrier protein from Thioalkalivibrio sulfidiphilus (strain HL-EbGR7).